Consider the following 420-residue polypeptide: Glutamyl-tRNA reductase (420 aa).

Substrate is bound by residues 49-52, S109, 114-116, and Q120; these read TCNR and EPQ. The active-site Nucleophile is the C50. 189 to 194 lines the NADP(+) pocket; it reads GAGETI.

Belongs to the glutamyl-tRNA reductase family. As to quaternary structure, homodimer.

It catalyses the reaction (S)-4-amino-5-oxopentanoate + tRNA(Glu) + NADP(+) = L-glutamyl-tRNA(Glu) + NADPH + H(+). It participates in porphyrin-containing compound metabolism; protoporphyrin-IX biosynthesis; 5-aminolevulinate from L-glutamyl-tRNA(Glu): step 1/2. Functionally, catalyzes the NADPH-dependent reduction of glutamyl-tRNA(Glu) to glutamate 1-semialdehyde (GSA). In Edwardsiella ictaluri (strain 93-146), this protein is Glutamyl-tRNA reductase.